A 361-amino-acid polypeptide reads, in one-letter code: Ribosomal RNA large subunit methyltransferase M (361 aa).

S-adenosyl-L-methionine is bound by residues S193, 226–229, D245, D265, and D283; that span reads CPGG. K312 serves as the catalytic Proton acceptor.

The protein belongs to the class I-like SAM-binding methyltransferase superfamily. RNA methyltransferase RlmE family. RlmM subfamily. Monomer.

It is found in the cytoplasm. The enzyme catalyses cytidine(2498) in 23S rRNA + S-adenosyl-L-methionine = 2'-O-methylcytidine(2498) in 23S rRNA + S-adenosyl-L-homocysteine + H(+). Its function is as follows. Catalyzes the 2'-O-methylation at nucleotide C2498 in 23S rRNA. In Histophilus somni (strain 2336) (Haemophilus somnus), this protein is Ribosomal RNA large subunit methyltransferase M.